We begin with the raw amino-acid sequence, 234 residues long: Probable transcriptional regulatory protein Psyr_3028 (234 aa).

The protein belongs to the TACO1 family.

It is found in the cytoplasm. This Pseudomonas syringae pv. syringae (strain B728a) protein is Probable transcriptional regulatory protein Psyr_3028.